The primary structure comprises 202 residues: Glycerol-3-phosphate acyltransferase (202 aa).

A run of 4 helical transmembrane segments spans residues 11–31 (ALIAALVLGYACGAIPFGLIL), 87–107 (PALAAGLGAFLGHLFPVWLGF), 116–136 (FIGVLLALSPLTLAAFAAIWL), and 158–178 (VILWALGHGGVAALFLVLAAL).

It belongs to the PlsY family. As to quaternary structure, probably interacts with PlsX.

Its subcellular location is the cell inner membrane. The enzyme catalyses an acyl phosphate + sn-glycerol 3-phosphate = a 1-acyl-sn-glycero-3-phosphate + phosphate. It functions in the pathway lipid metabolism; phospholipid metabolism. Its function is as follows. Catalyzes the transfer of an acyl group from acyl-phosphate (acyl-PO(4)) to glycerol-3-phosphate (G3P) to form lysophosphatidic acid (LPA). This enzyme utilizes acyl-phosphate as fatty acyl donor, but not acyl-CoA or acyl-ACP. The polypeptide is Glycerol-3-phosphate acyltransferase (Methylorubrum populi (strain ATCC BAA-705 / NCIMB 13946 / BJ001) (Methylobacterium populi)).